A 180-amino-acid polypeptide reads, in one-letter code: Trafficking protein particle complex subunit 3 (180 aa).

Cys-68 carries S-palmitoyl cysteine lipidation.

Belongs to the TRAPP small subunits family. BET3 subfamily. As to quaternary structure, homodimer. Component of the multisubunit transport protein particle (TRAPP) complex, which includes at least TRAPPC2, TRAPPC2L, TRAPPC3, TRAPPC3L, TRAPPC4, TRAPPC5, TRAPPC8, TRAPPC9, TRAPPC10, TRAPPC11 and TRAPPC12. Heterodimer with TRAPPC6A. The heterodimer TRAPPC3-TRAPPC6A interacts with TRAPPC2L. Heterodimer with TRAPPC6b. The heterodimer TRAPPC6B-TRAPPC3 interacts with TRAPPC1 likely providing a core for TRAPP complex formation.

It localises to the golgi apparatus. The protein resides in the cis-Golgi network. The protein localises to the endoplasmic reticulum. Its function is as follows. May play a role in vesicular transport from endoplasmic reticulum to Golgi. The polypeptide is Trafficking protein particle complex subunit 3 (Homo sapiens (Human)).